Here is a 323-residue protein sequence, read N- to C-terminus: ATP synthase gamma chain (323 aa).

It belongs to the ATPase gamma chain family. In terms of assembly, F-type ATPases have 2 components, CF(1) - the catalytic core - and CF(0) - the membrane proton channel. CF(1) has five subunits: alpha(3), beta(3), gamma(1), delta(1), epsilon(1). CF(0) has three main subunits: a, b and c.

Its subcellular location is the cell membrane. Functionally, produces ATP from ADP in the presence of a proton gradient across the membrane. The gamma chain is believed to be important in regulating ATPase activity and the flow of protons through the CF(0) complex. This Nocardia farcinica (strain IFM 10152) protein is ATP synthase gamma chain.